Here is a 555-residue protein sequence, read N- to C-terminus: MTLRAAVFDLDGVLALPAVFGVLGRTEEALALPRGLLNDAFQKGGPEGATTRLMKGEITLSQWIPLMEENCRKCSETAKVCLPKNFSIKEIFDKAISARKINRPMLQAALMLRKKGFTTAILTNTWLDDRAERDGLAQLMCELKMHFDFLIESCQVGMVKPEPQIYKFLLDTLKASPSEVVFLDDIGANLKPARDLGMVTILVQDTDTALKELEKVTGIQLLNTPAPLPTSCNPSDMSHGYVTVKPRVRLHFVELGSGPAVCLCHGFPESWYSWRYQIPALAQAGYRVLAMDMKGYGESSAPPEIEEYCMEVLCKEMVTFLDKLGLSQAVFIGHDWGGMLVWYMALFYPERVRAVASLNTPFIPANPNMSPLESIKANPVFDYQLYFQEPGVAEAELEQNLSRTFKSLFRASDESVLSMHKVCEAGGLFVNSPEEPSLSRMVTEEEIQFYVQQFKKSGFRGPLNWYRNMERNWKWACKSLGRKILIPALMVTAEKDFVLVPQMSQHMEDWIPHLKRGHIEDCGHWTQMDKPTEVNQILIKWLDSDARNPPVVSKM.

Positions 1–224 are phosphatase; it reads MTLRAAVFDL…KVTGIQLLNT (224 aa). The Mg(2+) site is built by Asp-9 and Asp-11. Lys-43 is subject to N6-acetyllysine. N6-succinyllysine is present on Lys-55. 123-124 contacts phosphate; that stretch reads TN. Asp-185 is a binding site for Mg(2+). An N6-acetyllysine mark is found at Lys-191 and Lys-215. Positions 235–555 are epoxide hydrolase; the sequence is SDMSHGYVTV…ARNPPVVSKM (321 aa). The region spanning 259–531 is the AB hydrolase-1 domain; the sequence is PAVCLCHGFP…CGHWTQMDKP (273 aa). Asp-335 functions as the Nucleophile in the catalytic mechanism. Ser-370 bears the Phosphoserine mark. Substrate is bound at residue Tyr-383. 2 positions are modified to N6-succinyllysine: Lys-421 and Lys-455. Tyr-466 acts as the Proton donor in catalysis. Cys-522 carries S-(15-deoxy-Delta12,14-prostaglandin J2-9-yl)cysteine lipidation. His-524 (proton acceptor) is an active-site residue. The short motif at 553–555 is the Microbody targeting signal element; sequence SKM. Lys-554 is modified (N6-succinyllysine).

Belongs to the AB hydrolase superfamily. Epoxide hydrolase family. Homodimer. Mg(2+) is required as a cofactor. Post-translationally, the N-terminus is blocked. The covalent modification of cysteine by 15-deoxy-Delta12,14-prostaglandin-J2 is autocatalytic and reversible. It may occur as an alternative to other cysteine modifications, such as S-nitrosylation and S-palmitoylation.

The protein resides in the cytoplasm. The protein localises to the peroxisome. It catalyses the reaction an epoxide + H2O = an ethanediol. It carries out the reaction (9S,10S)-10-hydroxy-9-(phosphooxy)octadecanoate + H2O = (9S,10S)-9,10-dihydroxyoctadecanoate + phosphate. The enzyme catalyses 12-phosphooxy-(9Z)-octadecenoate + H2O = 12-hydroxy-(9Z)-octadecenoate + phosphate. The catalysed reaction is 12-phosphooxy-(9E)-octadecenoate + H2O = 12-hydroxy-(9E)-octadecenoate + phosphate. It catalyses the reaction 12-(phosphooxy)octadecanoate + H2O = 12-hydroxyoctadecanoate + phosphate. It carries out the reaction 8,9-epoxy-(5Z,11Z,14Z)-eicosatrienoate + H2O = 8,9-dihydroxy-(5Z,11Z,14Z)-eicosatrienoate. The enzyme catalyses 11,12-epoxy-(5Z,8Z,14Z)-eicosatrienoate + H2O = 11,12-dihydroxy-(5Z,8Z,14Z)-eicosatrienoate. The catalysed reaction is 14,15-epoxy-(5Z,8Z,11Z)-eicosatrienoate + H2O = 14,15-dihydroxy-(5Z,8Z,11Z)-eicosatrienoate. It catalyses the reaction 9,10-epoxy-(12Z)-octadecenoate + H2O = 9,10-dihydroxy-(12Z)-octadecenoate. It carries out the reaction 8-hydroxy-(11S,12S)-epoxy-(5Z,9E,14Z)-eicosatrienoate + H2O = (8,11R,12S)-trihydroxy-(5Z,9E,14Z)-eicosatrienoate. The enzyme catalyses 10-hydroxy-(11S,12S)-epoxy- (5Z,8Z,14Z)-eicosatrienoate + H2O = (10,11S,12R)-trihydroxy-(5Z,8Z,14Z)-eicosatrienoate. The catalysed reaction is 1-tetradecanoyl-sn-glycerol 3-phosphate + H2O = 1-tetradecanoyl-sn-glycerol + phosphate. It catalyses the reaction 1-octadecanoyl-sn-glycero-3-phosphate + H2O = 1-octadecanoyl-sn-glycerol + phosphate. It carries out the reaction 1-(5Z,8Z,11Z,14Z-eicosatetraenoyl)-sn-glycero-3-phosphate + H2O = 1-(5Z,8Z,11Z,14Z-eicosatetraenoyl)-sn-glycerol + phosphate. The enzyme catalyses 1-hexadecanoyl-sn-glycero-3-phosphate + H2O = 1-hexadecanoyl-sn-glycerol + phosphate. The catalysed reaction is 1-(9Z-octadecenoyl)-sn-glycero-3-phosphate + H2O = 1-(9Z-octadecenoyl)-sn-glycerol + phosphate. It catalyses the reaction (8S,9R)-epoxy-(5Z,11Z,14Z)-eicosatrienoate + H2O = (8S,9S)-dihydroxy-(5Z,11Z,14Z)-eicosatrienoate. It carries out the reaction (11S,12R)-epoxy-(5Z,8Z,14Z)-eicosatrienoate + H2O = (11R,12R)-dihydroxy-(5Z,8Z,14Z)-eicosatrienoate. The enzyme catalyses (11S,12R)-epoxy-(5Z,8Z,14Z)-eicosatrienoate + H2O = (11S,12S)-dihydroxy-(5Z,8Z,14Z)-eicosatrienoate. The catalysed reaction is (14S,15R)-epoxy-(5Z,8Z,11Z)-eicosatrienoate + H2O = (14R,15R)-dihydroxy-(5Z,8Z,11Z)-eicosatrienoate. It catalyses the reaction (14S,15R)-epoxy-(5Z,8Z,11Z)-eicosatrienoate + H2O = (14S,15S)-dihydroxy-(5Z,8Z,11Z)-eicosatrienoate. It carries out the reaction (11R,12S)-epoxy-(5Z,8Z,14Z)-eicosatrienoate + H2O = (11S,12S)-dihydroxy-(5Z,8Z,14Z)-eicosatrienoate. The enzyme catalyses (11R,12S)-epoxy-(5Z,8Z,14Z)-eicosatrienoate + H2O = (11R,12R)-dihydroxy-(5Z,8Z,14Z)-eicosatrienoate. The catalysed reaction is (8S,9R)-epoxy-(5Z,11Z,14Z)-eicosatrienoate + H2O = (8R,9R)-dihydroxy-(5Z,11Z,14Z)-eicosatrienoate. It catalyses the reaction (14R,15S)-epoxy-(5Z,8Z,11Z)-eicosatrienoate + H2O = (14R,15R)-dihydroxy-(5Z,8Z,11Z)-eicosatrienoate. Inhibited by 1-(1-acetylpiperidin-4-yl)-3-(4-(trifl uoromethoxy)phenyl)urea (TPAU), 1-cyclohexyl-3-dodecylurea (CDU), 12-(3-adamantan-1-yl-ureido)-dodecanoic acid (AUDA), 1-((3S, 5S, 7S)-adamantan-1-yl)-3-(5-(2-(2-ethoxyethoxy) ethoxy)pentyl)urea (AEPU), N-adamantyl-N[']-cyclohexyl urea (ACU), 4-(((1S, 4S)-4-(3-((3S, 5S, 7S)-adamantan-1-yl) ureido)cyclohexyl)oxy)benzoic acid (c-AUCB), 4-(((1R, 4R)-4-(3-((3S, 5S, 7S)-adamantan-1-yl)ureido)cyclohexyl)oxy)benzoic acid (t-AUCB), 4-(((1R, 4R)-4-(3-(4(trifluoromethoxy)phenyl)ureido)cyclohexyl)oxy)benzoic acid (t-TAUCB) and to a lesser extent by 8-(3-((3S, 5S, 7S)-adamantan-1-yl)ureido) octanoic acid (AUOA). Phosphatase activity is inhibited by dodecyl-phosphate, phospholipids such as phospho-lysophosphatidic acids and fatty acids such as palmitic acid and lauric acid. Functionally, bifunctional enzyme. The C-terminal domain has epoxide hydrolase activity and acts on epoxides (alkene oxides, oxiranes) and arene oxides. Plays a role in xenobiotic metabolism by degrading potentially toxic epoxides. Also determines steady-state levels of physiological mediators. Bifunctional enzyme. The N-terminal domain has lipid phosphatase activity, with the highest activity towards threo-9,10-phosphonooxy-hydroxy-octadecanoic acid, followed by erythro-9,10-phosphonooxy-hydroxy-octadecanoic acid, 12-phosphonooxy-octadec-9Z-enoic acid and 12-phosphonooxy-octadec-9E-enoic acid. Has phosphatase activity toward lyso-glycerophospholipids with also some lower activity toward lysolipids of sphingolipid and isoprenoid phosphates. The protein is Bifunctional epoxide hydrolase 2 of Homo sapiens (Human).